Reading from the N-terminus, the 251-residue chain is Triosephosphate isomerase (251 aa).

9–11 (NWK) is a binding site for substrate. Histidine 95 acts as the Electrophile in catalysis. Catalysis depends on glutamate 167, which acts as the Proton acceptor. Substrate-binding positions include glycine 173, serine 213, and 234–235 (GG).

This sequence belongs to the triosephosphate isomerase family. Homodimer.

The protein resides in the cytoplasm. The enzyme catalyses D-glyceraldehyde 3-phosphate = dihydroxyacetone phosphate. Its pathway is carbohydrate biosynthesis; gluconeogenesis. It functions in the pathway carbohydrate degradation; glycolysis; D-glyceraldehyde 3-phosphate from glycerone phosphate: step 1/1. Functionally, involved in the gluconeogenesis. Catalyzes stereospecifically the conversion of dihydroxyacetone phosphate (DHAP) to D-glyceraldehyde-3-phosphate (G3P). The sequence is that of Triosephosphate isomerase from Pediococcus pentosaceus (strain ATCC 25745 / CCUG 21536 / LMG 10740 / 183-1w).